The primary structure comprises 356 residues: Nucleosome assembly protein 1;4 (356 aa).

Positions 34–88 (VNALKNKLQNLAGQHSDILETLTPQVRKRVDVLRELQSQHDELESHFFEERAALE) form a coiled coil. Residues 55–70 (LTPQVRKRVDVLRELQ) carry the Nuclear export signal motif. The Nuclear localization signal motif lies at 230–235 (KKKPKK). The tract at residues 304–356 (FTGEAAEGDEFEDIEDDDDDDDDDDDEDDEDEEDEDDEEEEKSKKKSSALKVE) is disordered. Over residues 309-343 (AEGDEFEDIEDDDDDDDDDDDEDDEDEEDEDDEEE) the composition is skewed to acidic residues. Residues 347 to 356 (KKKSSALKVE) show a composition bias toward basic residues.

The protein belongs to the nucleosome assembly protein (NAP) family. Can form homomeric and heteromeric protein complexes with NAP1;3. Binds histones H2A and H2B in vivo. Also able to bind histones H1 and H4 in vitro. Interacts with CYCB1;1 and with alpha tubulin.

The protein resides in the nucleus. It localises to the cytoplasm. In terms of biological role, may modulate chromatin structure by regulation of nucleosome assembly/disassembly. Could function together with B-type cyclins in the regulation of microtubule dynamics. This Nicotiana tabacum (Common tobacco) protein is Nucleosome assembly protein 1;4 (NAP1;4).